The chain runs to 120 residues: NAD(P)H-quinone oxidoreductase subunit 3, chloroplastic (120 aa).

Transmembrane regions (helical) follow at residues 3–23 (ILEG…IPVI), 64–84 (MFAL…PWAV), and 89–109 (LGLS…IGLV).

This sequence belongs to the complex I subunit 3 family. As to quaternary structure, NDH is composed of at least 16 different subunits, 5 of which are encoded in the nucleus.

It localises to the plastid. The protein resides in the chloroplast thylakoid membrane. It carries out the reaction a plastoquinone + NADH + (n+1) H(+)(in) = a plastoquinol + NAD(+) + n H(+)(out). It catalyses the reaction a plastoquinone + NADPH + (n+1) H(+)(in) = a plastoquinol + NADP(+) + n H(+)(out). Its function is as follows. NDH shuttles electrons from NAD(P)H:plastoquinone, via FMN and iron-sulfur (Fe-S) centers, to quinones in the photosynthetic chain and possibly in a chloroplast respiratory chain. The immediate electron acceptor for the enzyme in this species is believed to be plastoquinone. Couples the redox reaction to proton translocation, and thus conserves the redox energy in a proton gradient. The chain is NAD(P)H-quinone oxidoreductase subunit 3, chloroplastic from Nephroselmis olivacea (Green alga).